The sequence spans 228 residues: MRYLNQSEAQNIDQELFNEYAFSVDQLMELAGLSVAVAISKAYPRTGDGERLLVCSGPGNNGGDGLVAARHLKMFGYQPEIYYPKRPNRTLMNNLVTQCEKMEISFLTDLPSAQEMNFKYRLVVDAIFGFSFKGEVRAPFDDVLKTLKNVKIPLCAVDVPSGWDVEKGNPEGIQPEFLISLTAPKLCANHFKGRFHYLGGRFVPDLLLKKYELELPDFPGTDPCVLLE.

Residues Ala-9–Glu-214 enclose the YjeF N-terminal domain. (6S)-NADPHX is bound at residue Asn-60–Asp-64. K(+) contacts are provided by Asn-61 and Asp-125. Residues Gly-129–Glu-135 and Asp-158 contribute to the (6S)-NADPHX site. Position 161 (Ser-161) interacts with K(+).

It belongs to the NnrE/AIBP family. It depends on K(+) as a cofactor.

The enzyme catalyses (6R)-NADHX = (6S)-NADHX. The catalysed reaction is (6R)-NADPHX = (6S)-NADPHX. In terms of biological role, catalyzes the epimerization of the S- and R-forms of NAD(P)HX, a damaged form of NAD(P)H that is a result of enzymatic or heat-dependent hydration. This is a prerequisite for the S-specific NAD(P)H-hydrate dehydratase to allow the repair of both epimers of NAD(P)HX. In Nematostella vectensis (Starlet sea anemone), this protein is NAD(P)H-hydrate epimerase.